The primary structure comprises 614 residues: Major facilitator superfamily domain-containing protein 6-like protein B (614 aa).

Helical transmembrane passes span 41–61 (LGLGASLVGIIIGFKHAVHLL) and 78–98 (FFIMASLLLSAGAGGLFAFYP). Residues 177-191 (HQRFTDQFPSSSPLT) show a composition bias toward polar residues. The tract at residues 177-243 (HQRFTDQFPS…PFATHPNVSH (67 aa)) is disordered. The segment covering 205 to 227 (GSGKAQKANSSKSSASNSKQRSS) has biased composition (low complexity). Transmembrane regions (helical) follow at residues 270–290 (IFLIVLAMVIIWEILAAPLEW), 312–332 (LWIWGYLGASMGSIFITFLID), 345–365 (VSFHFFCYGGFLISTFFLSTL), 393–413 (IVLTALTVFVLGAVGSTIQNF), 425–445 (ELYMGLSIAAGLLSELALYFF), 457–477 (WMVVLGLLSLGIQFLYYSFLW), 480–500 (WSVVAIQILNAFSSGVIWWAI), 520–540 (LRWLAYGCGSSAGSFASGFII), and 546–566 (AVLYQACCITLLTWIVIFLLV).

Belongs to the major facilitator superfamily. MFSD6 family.

Its subcellular location is the membrane. The protein is Major facilitator superfamily domain-containing protein 6-like protein B (mfsd6l-b) of Xenopus laevis (African clawed frog).